The sequence spans 122 residues: Large ribosomal subunit protein uL14 (122 aa).

This sequence belongs to the universal ribosomal protein uL14 family. Part of the 50S ribosomal subunit. Forms a cluster with proteins L3 and L19. In the 70S ribosome, L14 and L19 interact and together make contacts with the 16S rRNA in bridges B5 and B8.

In terms of biological role, binds to 23S rRNA. Forms part of two intersubunit bridges in the 70S ribosome. The sequence is that of Large ribosomal subunit protein uL14 from Magnetococcus marinus (strain ATCC BAA-1437 / JCM 17883 / MC-1).